Reading from the N-terminus, the 427-residue chain is UPF0229 protein YeaH (427 aa).

The disordered stretch occupies residues 84 to 110; that stretch reads QSDRIERPQGGGGGSGSGQGQASQDGE. A compositionally biased stretch (gly residues) spans 92–102; the sequence is QGGGGGSGSGQ.

Belongs to the UPF0229 family.

The chain is UPF0229 protein YeaH from Escherichia fergusonii (strain ATCC 35469 / DSM 13698 / CCUG 18766 / IAM 14443 / JCM 21226 / LMG 7866 / NBRC 102419 / NCTC 12128 / CDC 0568-73).